The chain runs to 190 residues: GTP cyclohydrolase 1 (190 aa).

Residues cysteine 75, histidine 78, and cysteine 146 each contribute to the Zn(2+) site.

This sequence belongs to the GTP cyclohydrolase I family. Toroid-shaped homodecamer, composed of two pentamers of five dimers.

The enzyme catalyses GTP + H2O = 7,8-dihydroneopterin 3'-triphosphate + formate + H(+). It functions in the pathway cofactor biosynthesis; 7,8-dihydroneopterin triphosphate biosynthesis; 7,8-dihydroneopterin triphosphate from GTP: step 1/1. This chain is GTP cyclohydrolase 1, found in Campylobacter jejuni (strain RM1221).